A 118-amino-acid chain; its full sequence is Probable non-functional immunoglobulin lambda variable 1-50 (118 aa).

The N-terminal stretch at 1–19 is a signal peptide; sequence MAWSSLLLTLLAHCTGSWA. A framework-1 region spans residues 20–44; the sequence is QSVLTQPPSVSGAPGQRVTISCTGS. Residues 20–118 form the Ig-like domain; that stretch reads QSVLTQPPSV…CKAWDNSLNA (99 aa). A disulfide bridge connects residues Cys41 and Cys109. The segment at 45-53 is complementarity-determining-1; sequence SSNIGAGYV. The interval 54–70 is framework-2; that stretch reads VHWYQQLPGTAPKLLIY. Residues 71–73 form a complementarity-determining-2 region; the sequence is GNS. The interval 74–109 is framework-3; that stretch reads NRPSGVPDQFSGSKSGTSASLAITGLQSEDEADYYC. Residues 110–118 form a complementarity-determining-3 region; sequence KAWDNSLNA.

As to quaternary structure, immunoglobulins are composed of two identical heavy chains and two identical light chains; disulfide-linked.

The protein localises to the secreted. It localises to the cell membrane. Probable non-functional open reading frame (ORF) of V region of the variable domain of immunoglobulin light chains. Non-functional ORF generally cannot participate in the synthesis of a productive immunoglobulin chain due to altered V-(D)-J or switch recombination and/or splicing site (at mRNA level) and/or conserved amino acid change (protein level). Immunoglobulins, also known as antibodies, are membrane-bound or secreted glycoproteins produced by B lymphocytes. In the recognition phase of humoral immunity, the membrane-bound immunoglobulins serve as receptors which, upon binding of a specific antigen, trigger the clonal expansion and differentiation of B lymphocytes into immunoglobulins-secreting plasma cells. Secreted immunoglobulins mediate the effector phase of humoral immunity, which results in the elimination of bound antigens. The antigen binding site is formed by the variable domain of one heavy chain, together with that of its associated light chain. Thus, each immunoglobulin has two antigen binding sites with remarkable affinity for a particular antigen. The variable domains are assembled by a process called V-(D)-J rearrangement and can then be subjected to somatic hypermutations which, after exposure to antigen and selection, allow affinity maturation for a particular antigen. The sequence is that of Probable non-functional immunoglobulin lambda variable 1-50 from Homo sapiens (Human).